A 353-amino-acid chain; its full sequence is Nuclear hormone receptor family member nhr-27 (353 aa).

Residues 24–102 constitute a DNA-binding region (nuclear receptor); the sequence is VSNCVVCGRL…KGMLDLSRYT (79 aa). 2 consecutive NR C4-type zinc fingers follow at residues 27 to 47 and 64 to 85; these read CVVC…CSAC and CKYS…CKFC. Residues 119 to 351 enclose the NR LBD domain; that stretch reads ETLFLTMTVS…SQVHQDVIEF (233 aa). Positions 340-351 are AF-2; it reads QPSQVHQDVIEF.

The protein belongs to the nuclear hormone receptor family.

Its subcellular location is the nucleus. In terms of biological role, ligand-activated transcription factor. Involved in lifespan extension in a manner dependent upon mitochondrial function. The chain is Nuclear hormone receptor family member nhr-27 from Caenorhabditis elegans.